Consider the following 394-residue polypeptide: Lipase 3 (394 aa).

Positions 1–20 are cleaved as a signal peptide; sequence MTRGALKVTILLVGLGLVLA. An N-linked (GlcNAc...) asparagine glycan is attached at Asn131. Active-site charge relay system residues include Ser164 and His369.

It belongs to the AB hydrolase superfamily. Lipase family. In terms of tissue distribution, fat body.

This chain is Lipase 3 (Lip3), found in Drosophila melanogaster (Fruit fly).